The sequence spans 206 residues: Ribonuclease HII (206 aa).

The 193-residue stretch at 14-206 (ALVCGIDEAG…FRLRQLGEKP (193 aa)) folds into the RNase H type-2 domain. Residues Asp-20, Glu-21, and Asp-117 each contribute to the a divalent metal cation site.

Belongs to the RNase HII family. Mn(2+) serves as cofactor. The cofactor is Mg(2+).

The protein localises to the cytoplasm. The enzyme catalyses Endonucleolytic cleavage to 5'-phosphomonoester.. Endonuclease that specifically degrades the RNA of RNA-DNA hybrids. The protein is Ribonuclease HII of Pelodictyon phaeoclathratiforme (strain DSM 5477 / BU-1).